The chain runs to 128 residues: Small ribosomal subunit protein uS12 (128 aa).

Positions M1–Q29 are disordered. D89 is subject to 3-methylthioaspartic acid. Residues G106–K128 are disordered.

Belongs to the universal ribosomal protein uS12 family. Part of the 30S ribosomal subunit. Contacts proteins S8 and S17. May interact with IF1 in the 30S initiation complex.

Its function is as follows. With S4 and S5 plays an important role in translational accuracy. In terms of biological role, interacts with and stabilizes bases of the 16S rRNA that are involved in tRNA selection in the A site and with the mRNA backbone. Located at the interface of the 30S and 50S subunits, it traverses the body of the 30S subunit contacting proteins on the other side and probably holding the rRNA structure together. The combined cluster of proteins S8, S12 and S17 appears to hold together the shoulder and platform of the 30S subunit. This Dictyoglomus turgidum (strain DSM 6724 / Z-1310) protein is Small ribosomal subunit protein uS12.